The chain runs to 431 residues: Na(+)-translocating NADH-quinone reductase subunit F (431 aa).

The helical transmembrane segment at 10-30 (ISIASLVFCVIGLILSGIILI) threads the bilayer. One can recognise a 2Fe-2S ferredoxin-type domain in the interval 41 to 133 (CKLKINDDDS…DMCLEIEERY (93 aa)). [2Fe-2S] cluster is bound by residues C76, C82, C85, and C117. The FAD-binding FR-type domain maps to 136–286 (ASSWEGTVVS…SGPYGESFMK (151 aa)).

This sequence belongs to the NqrF family. In terms of assembly, composed of six subunits; NqrA, NqrB, NqrC, NqrD, NqrE and NqrF. It depends on [2Fe-2S] cluster as a cofactor. The cofactor is FAD.

It localises to the cell inner membrane. The catalysed reaction is a ubiquinone + n Na(+)(in) + NADH + H(+) = a ubiquinol + n Na(+)(out) + NAD(+). NQR complex catalyzes the reduction of ubiquinone-1 to ubiquinol by two successive reactions, coupled with the transport of Na(+) ions from the cytoplasm to the periplasm. The first step is catalyzed by NqrF, which accepts electrons from NADH and reduces ubiquinone-1 to ubisemiquinone by a one-electron transfer pathway. The chain is Na(+)-translocating NADH-quinone reductase subunit F from Chlamydia caviae (strain ATCC VR-813 / DSM 19441 / 03DC25 / GPIC) (Chlamydophila caviae).